We begin with the raw amino-acid sequence, 500 residues long: Serine carboxypeptidase 3 (500 aa).

The N-terminal stretch at 1–21 (MATTPRLASLLLLLALCAAAA) is a signal peptide. A propeptide spanning residues 22 to 73 (GALRLPPDASFPGAQAERLIRALNLLPGRPRRGLGAGAEDVAPGQLLERRVT) is cleaved from the precursor. Cystine bridges form between Cys-126–Cys-366, Cys-294–Cys-309, and Cys-332–Cys-337. N-linked (GlcNAc...) asparagine glycosylation is present at Asn-144. Ser-216 is an active-site residue. Asp-404 is an active-site residue. A substrate-binding site is contributed by Cys-407. The active site involves His-461. Positions 485-500 (ESVPEEEPATTFYAAI) are excised as a propeptide.

This sequence belongs to the peptidase S10 family. Monomer.

It carries out the reaction Release of a C-terminal amino acid with broad specificity.. The polypeptide is Serine carboxypeptidase 3 (CBP3) (Triticum aestivum (Wheat)).